A 264-amino-acid polypeptide reads, in one-letter code: S-adenosylmethionine decarboxylase proenzyme (264 aa).

The active-site Schiff-base intermediate with substrate; via pyruvic acid is the S113. A Pyruvic acid (Ser); by autocatalysis modification is found at S113. H118 functions as the Proton acceptor; for processing activity in the catalytic mechanism. Residue C141 is the Proton donor; for catalytic activity of the active site.

Belongs to the prokaryotic AdoMetDC family. Type 2 subfamily. As to quaternary structure, heterooctamer of four alpha and four beta chains arranged as a tetramer of alpha/beta heterodimers. It depends on pyruvate as a cofactor. Post-translationally, is synthesized initially as an inactive proenzyme. Formation of the active enzyme involves a self-maturation process in which the active site pyruvoyl group is generated from an internal serine residue via an autocatalytic post-translational modification. Two non-identical subunits are generated from the proenzyme in this reaction, and the pyruvate is formed at the N-terminus of the alpha chain, which is derived from the carboxyl end of the proenzyme. The post-translation cleavage follows an unusual pathway, termed non-hydrolytic serinolysis, in which the side chain hydroxyl group of the serine supplies its oxygen atom to form the C-terminus of the beta chain, while the remainder of the serine residue undergoes an oxidative deamination to produce ammonia and the pyruvoyl group blocking the N-terminus of the alpha chain.

It carries out the reaction S-adenosyl-L-methionine + H(+) = S-adenosyl 3-(methylsulfanyl)propylamine + CO2. It participates in amine and polyamine biosynthesis; S-adenosylmethioninamine biosynthesis; S-adenosylmethioninamine from S-adenosyl-L-methionine: step 1/1. Catalyzes the decarboxylation of S-adenosylmethionine to S-adenosylmethioninamine (dcAdoMet), the propylamine donor required for the synthesis of the polyamines spermine and spermidine from the diamine putrescine. This is S-adenosylmethionine decarboxylase proenzyme from Pseudomonas aeruginosa (strain ATCC 15692 / DSM 22644 / CIP 104116 / JCM 14847 / LMG 12228 / 1C / PRS 101 / PAO1).